Consider the following 215-residue polypeptide: Probable nicotinate-nucleotide adenylyltransferase (215 aa).

It belongs to the NadD family.

The catalysed reaction is nicotinate beta-D-ribonucleotide + ATP + H(+) = deamido-NAD(+) + diphosphate. It participates in cofactor biosynthesis; NAD(+) biosynthesis; deamido-NAD(+) from nicotinate D-ribonucleotide: step 1/1. Its function is as follows. Catalyzes the reversible adenylation of nicotinate mononucleotide (NaMN) to nicotinic acid adenine dinucleotide (NaAD). This chain is Probable nicotinate-nucleotide adenylyltransferase, found in Fervidobacterium nodosum (strain ATCC 35602 / DSM 5306 / Rt17-B1).